Consider the following 378-residue polypeptide: Putative glutamate--cysteine ligase 2 (378 aa).

The protein belongs to the glutamate--cysteine ligase type 2 family. YbdK subfamily.

The enzyme catalyses L-cysteine + L-glutamate + ATP = gamma-L-glutamyl-L-cysteine + ADP + phosphate + H(+). In terms of biological role, ATP-dependent carboxylate-amine ligase which exhibits weak glutamate--cysteine ligase activity. This is Putative glutamate--cysteine ligase 2 from Leifsonia xyli subsp. xyli (strain CTCB07).